A 1877-amino-acid polypeptide reads, in one-letter code: Phosphatidylinositol 4-kinase stt4 (1877 aa).

Positions 1305–1491 (PDSDAASSPI…KPILDRVMDK (187 aa)) constitute a PIK helical domain. The segment at 1492-1625 (MINSLSGEDK…EVWQSAIFKV (134 aa)) is pleckstrin homology (PH) domain conferring phosphoinositide binding specificity. In terms of domain architecture, PI3K/PI4K catalytic spans 1593 to 1861 (DPEELAVNGT…LIEQSYANKR (269 aa)). Residues 1599 to 1605 (VNGTEEE) are G-loop. Residues 1728–1736 (QFKDRHNGN) form a catalytic loop region. Residues 1747-1771 (HIDFGFIFDIAPGGITFESAPFKLT) are activation loop.

It belongs to the PI3/PI4-kinase family. Type III PI4K subfamily.

Its subcellular location is the cytoplasm. The catalysed reaction is a 1,2-diacyl-sn-glycero-3-phospho-(1D-myo-inositol) + ATP = a 1,2-diacyl-sn-glycero-3-phospho-(1D-myo-inositol 4-phosphate) + ADP + H(+). Its function is as follows. Acts on phosphatidylinositol (PI) in the first committed step in the production of the second messenger inositol 1,4,5,-trisphosphate. This Schizosaccharomyces pombe (strain 972 / ATCC 24843) (Fission yeast) protein is Phosphatidylinositol 4-kinase stt4 (stt4).